We begin with the raw amino-acid sequence, 122 residues long: Large ribosomal subunit protein uL14 (122 aa).

It belongs to the universal ribosomal protein uL14 family. In terms of assembly, part of the 50S ribosomal subunit. Forms a cluster with proteins L3 and L19. In the 70S ribosome, L14 and L19 interact and together make contacts with the 16S rRNA in bridges B5 and B8.

In terms of biological role, binds to 23S rRNA. Forms part of two intersubunit bridges in the 70S ribosome. The sequence is that of Large ribosomal subunit protein uL14 from Streptomyces griseus subsp. griseus (strain JCM 4626 / CBS 651.72 / NBRC 13350 / KCC S-0626 / ISP 5235).